The sequence spans 269 residues: Tryptophan synthase alpha chain (269 aa).

Catalysis depends on proton acceptor residues glutamate 50 and aspartate 61.

This sequence belongs to the TrpA family. Tetramer of two alpha and two beta chains.

It catalyses the reaction (1S,2R)-1-C-(indol-3-yl)glycerol 3-phosphate + L-serine = D-glyceraldehyde 3-phosphate + L-tryptophan + H2O. Its pathway is amino-acid biosynthesis; L-tryptophan biosynthesis; L-tryptophan from chorismate: step 5/5. In terms of biological role, the alpha subunit is responsible for the aldol cleavage of indoleglycerol phosphate to indole and glyceraldehyde 3-phosphate. This chain is Tryptophan synthase alpha chain, found in Buchnera aphidicola subsp. Baizongia pistaciae (strain Bp).